We begin with the raw amino-acid sequence, 144 residues long: Protein NrdI (144 aa).

This sequence belongs to the NrdI family.

Probably involved in ribonucleotide reductase function. In Streptococcus pyogenes serotype M4 (strain MGAS10750), this protein is Protein NrdI.